A 362-amino-acid polypeptide reads, in one-letter code: Phosphoserine aminotransferase (362 aa).

Arg-43 provides a ligand contact to L-glutamate. Pyridoxal 5'-phosphate contacts are provided by residues 77–78 (AR), Trp-103, Thr-153, Asp-173, and Gln-196. Lys-197 carries the post-translational modification N6-(pyridoxal phosphate)lysine.

It belongs to the class-V pyridoxal-phosphate-dependent aminotransferase family. SerC subfamily. In terms of assembly, homodimer. Pyridoxal 5'-phosphate is required as a cofactor.

It is found in the cytoplasm. It carries out the reaction O-phospho-L-serine + 2-oxoglutarate = 3-phosphooxypyruvate + L-glutamate. The enzyme catalyses 4-(phosphooxy)-L-threonine + 2-oxoglutarate = (R)-3-hydroxy-2-oxo-4-phosphooxybutanoate + L-glutamate. The protein operates within amino-acid biosynthesis; L-serine biosynthesis; L-serine from 3-phospho-D-glycerate: step 2/3. It functions in the pathway cofactor biosynthesis; pyridoxine 5'-phosphate biosynthesis; pyridoxine 5'-phosphate from D-erythrose 4-phosphate: step 3/5. Catalyzes the reversible conversion of 3-phosphohydroxypyruvate to phosphoserine and of 3-hydroxy-2-oxo-4-phosphonooxybutanoate to phosphohydroxythreonine. In Legionella pneumophila (strain Paris), this protein is Phosphoserine aminotransferase.